We begin with the raw amino-acid sequence, 472 residues long: Siroheme synthase 2 (472 aa).

A precorrin-2 dehydrogenase /sirohydrochlorin ferrochelatase region spans residues 1–204 (MDYFPIFCQL…EDQVQVEQHV (204 aa)). NAD(+)-binding positions include 22-23 (EV) and 43-44 (CE). At Ser-128 the chain carries Phosphoserine. The uroporphyrinogen-III C-methyltransferase stretch occupies residues 216–472 (GEVVLVGAGP…GMKEQVERVG (257 aa)). Residue Pro-225 participates in S-adenosyl-L-methionine binding. The active-site Proton acceptor is the Asp-248. Residue Lys-270 is the Proton donor of the active site. Residues 301-303 (GGD), Ile-306, 331-332 (TA), Met-382, and Gly-411 each bind S-adenosyl-L-methionine.

This sequence in the N-terminal section; belongs to the precorrin-2 dehydrogenase / sirohydrochlorin ferrochelatase family. It in the C-terminal section; belongs to the precorrin methyltransferase family.

The enzyme catalyses uroporphyrinogen III + 2 S-adenosyl-L-methionine = precorrin-2 + 2 S-adenosyl-L-homocysteine + H(+). It catalyses the reaction precorrin-2 + NAD(+) = sirohydrochlorin + NADH + 2 H(+). It carries out the reaction siroheme + 2 H(+) = sirohydrochlorin + Fe(2+). It functions in the pathway cofactor biosynthesis; adenosylcobalamin biosynthesis; precorrin-2 from uroporphyrinogen III: step 1/1. It participates in cofactor biosynthesis; adenosylcobalamin biosynthesis; sirohydrochlorin from precorrin-2: step 1/1. Its pathway is porphyrin-containing compound metabolism; siroheme biosynthesis; precorrin-2 from uroporphyrinogen III: step 1/1. The protein operates within porphyrin-containing compound metabolism; siroheme biosynthesis; siroheme from sirohydrochlorin: step 1/1. It functions in the pathway porphyrin-containing compound metabolism; siroheme biosynthesis; sirohydrochlorin from precorrin-2: step 1/1. Its function is as follows. Multifunctional enzyme that catalyzes the SAM-dependent methylations of uroporphyrinogen III at position C-2 and C-7 to form precorrin-2 via precorrin-1. Then it catalyzes the NAD-dependent ring dehydrogenation of precorrin-2 to yield sirohydrochlorin. Finally, it catalyzes the ferrochelation of sirohydrochlorin to yield siroheme. This chain is Siroheme synthase 2, found in Yersinia enterocolitica serotype O:8 / biotype 1B (strain NCTC 13174 / 8081).